The chain runs to 700 residues: ATP-dependent DNA helicase UvrD2 (700 aa).

Residues 10–301 (AGLDDQQREA…VRLERDYRST (292 aa)) form the UvrD-like helicase ATP-binding domain. ATP is bound by residues 34 to 39 (GTGKTR) and Arg299. The region spanning 302 to 553 (PQVVSLANRV…LYVGITRARV (252 aa)) is the UvrD-like helicase C-terminal domain. Residues 565-595 (PGGRQSRKPSRFLNGIAPQTRADPVPGTSRR) are disordered. An HRDC domain is found at 626 to 700 (ADVDEELLLQ…DVLQLVRGRT (75 aa)).

Belongs to the helicase family. UvrD subfamily. Requires Mg(2+) as cofactor.

It carries out the reaction Couples ATP hydrolysis with the unwinding of duplex DNA by translocating in the 3'-5' direction.. The enzyme catalyses ATP + H2O = ADP + phosphate + H(+). DNA-dependent ATPase, stimulated equally by ss- and dsDNA. Has both ATPase and helicase activities. The chain is ATP-dependent DNA helicase UvrD2 (uvrD2) from Mycobacterium bovis (strain ATCC BAA-935 / AF2122/97).